A 281-amino-acid chain; its full sequence is MKTNDNYIEEVTAKVLTSGKYSTLYPPTVRRVTERLFDRYPPKQLEKEVRKKLHQAYGAYIGGIDGKRLEKKIEKIIHEIPNPTTDEATRTEWEKEICLKILNLHTSTNERTVAYDELYQKIFEVTGVPTSITDAGCALNPFSFPFFTEAGMLGQYIGFDLDKGMIEAIEHSLRTLNAPEGIVVKQGDILSDPSGESDLLLMFKLYTLLDRQEEASGLKILQEWKYKNAVISFPIKTISGRDVGMEENYTVKFENDLVGSDLRIMQKLKLGNEMYFIVSRL.

S-adenosyl-L-methionine-binding positions include Tyr-60, 105-107, Arg-111, Gly-136, Asp-160, 186-187, Phe-203, and Gln-212; these read HTS and QG.

This sequence belongs to the methyltransferase superfamily. Aminoglycoside resistance family.

The enzyme catalyses guanosine(1405) in 16S rRNA + S-adenosyl-L-methionine = N(7)-methylguanosine(1405) in 16S rRNA + S-adenosyl-L-homocysteine. Specifically methylates the N(7) position of guanine 1405 in 16S rRNA. Confers resistance to various aminoglycosides, including gentamicin and kanamycin. The chain is 16S rRNA (guanine(1405)-N(7))-methyltransferase (rmtC) from Proteus mirabilis.